The sequence spans 229 residues: Ras-related protein RABA6b (229 aa).

Residue 20-27 (GDSAVGKS) participates in GTP binding. An Effector region motif is present at residues 42–50 (SKPTIGVDF). GTP is bound by residues 68-72 (DTAGQ), 126-129 (NKSD), and 156-157 (SA). 2 S-geranylgeranyl cysteine lipidation sites follow: cysteine 226 and cysteine 227.

This sequence belongs to the small GTPase superfamily. Rab family.

It localises to the cell membrane. Functionally, intracellular vesicle trafficking and protein transport. The polypeptide is Ras-related protein RABA6b (RABA6B) (Arabidopsis thaliana (Mouse-ear cress)).